A 96-amino-acid chain; its full sequence is Co-chaperonin GroES (96 aa).

Belongs to the GroES chaperonin family. Heptamer of 7 subunits arranged in a ring. Interacts with the chaperonin GroEL.

Its subcellular location is the cytoplasm. Together with the chaperonin GroEL, plays an essential role in assisting protein folding. The GroEL-GroES system forms a nano-cage that allows encapsulation of the non-native substrate proteins and provides a physical environment optimized to promote and accelerate protein folding. GroES binds to the apical surface of the GroEL ring, thereby capping the opening of the GroEL channel. This Methylorubrum populi (strain ATCC BAA-705 / NCIMB 13946 / BJ001) (Methylobacterium populi) protein is Co-chaperonin GroES.